The primary structure comprises 224 residues: Heme response regulator HssR (224 aa).

Residues 3-116 (KCLIVDDDYK…ELLFRIQAVL (114 aa)) form the Response regulatory domain. Position 52 is a 4-aspartylphosphate (aspartate 52). A DNA-binding region (ompR/PhoB-type) is located at residues 124–222 (QDIIKLGNVT…VRGQGYRVIT (99 aa)).

In terms of processing, phosphorylated by HssS.

The protein localises to the cytoplasm. In terms of biological role, member of the two-component regulatory system HssS/HssR involved in intracellular heme homeostasis and tempering of staphylococcal virulence. Phosphorylated HssR binds to a direct repeat sequence within hrtAB promoter and activates the expression of hrtAB, an efflux pump, in response to extracellular heme, hemin, hemoglobin or blood. In Staphylococcus haemolyticus (strain JCSC1435), this protein is Heme response regulator HssR (hssR).